Reading from the N-terminus, the 270-residue chain is Urease accessory protein UreD (270 aa).

It belongs to the UreD family. In terms of assembly, ureD, UreF and UreG form a complex that acts as a GTP-hydrolysis-dependent molecular chaperone, activating the urease apoprotein by helping to assemble the nickel containing metallocenter of UreC. The UreE protein probably delivers the nickel.

It localises to the cytoplasm. Required for maturation of urease via the functional incorporation of the urease nickel metallocenter. This chain is Urease accessory protein UreD, found in Actinobacillus pleuropneumoniae serotype 7 (strain AP76).